The sequence spans 287 residues: Large ribosomal subunit protein uL2 (287 aa).

Basic residues-rich tracts occupy residues 209-220 and 258-287; these read GRNRWKARRPKV and KTRKKKKQSNKLIVRRRRRSSKRSRGGRQS. The disordered stretch occupies residues 209-287; it reads GRNRWKARRP…SKRSRGGRQS (79 aa).

It belongs to the universal ribosomal protein uL2 family. In terms of assembly, part of the 50S ribosomal subunit. Forms a bridge to the 30S subunit in the 70S ribosome.

One of the primary rRNA binding proteins. Required for association of the 30S and 50S subunits to form the 70S ribosome, for tRNA binding and peptide bond formation. It has been suggested to have peptidyltransferase activity; this is somewhat controversial. Makes several contacts with the 16S rRNA in the 70S ribosome. The chain is Large ribosomal subunit protein uL2 from Acaryochloris marina (strain MBIC 11017).